The sequence spans 257 residues: Homeobox protein goosecoid (257 aa).

Residues 160–219 (KRRHRTIFTDEQLEALENLFQETKYPDVGTREQLARKVHLREEKVEVWFKNRRAKWRRQK) constitute a DNA-binding region (homeobox). The disordered stretch occupies residues 213–257 (AKWRRQKRSSSEESENAEKWNKTSSSKASPEKREEEGKSDLDSDS). Basic and acidic residues predominate over residues 241-257 (SPEKREEEGKSDLDSDS).

The protein belongs to the paired homeobox family. Bicoid subfamily.

Its subcellular location is the nucleus. Its function is as follows. Regulates chordin (CHRD). May play a role in spatial programing within discrete embryonic fields or lineage compartments during organogenesis. In concert with NKX3-2, plays a role in defining the structural components of the middle ear; required for the development of the entire tympanic ring. Probably involved in the regulatory networks that define neural crest cell fate specification and determine mesoderm cell lineages in mammals. This Homo sapiens (Human) protein is Homeobox protein goosecoid (GSC).